The chain runs to 189 residues: Blue copper protein (189 aa).

Residues 1–24 (MAFSNALVLCFLLAIINMALPSLA) form the signal peptide. One can recognise a Phytocyanin domain in the interval 25-124 (TVYTVGDTSG…GMKLSIKVKA (100 aa)). Residues His-65, Cys-106, and His-111 each contribute to the Cu cation site. A disulfide bridge links Cys-78 with Cys-106. A compositionally biased stretch (low complexity) spans 127-160 (GSSAAPSATPSSSGKGSPSSDDTPAATTTTTTPT). Residues 127-165 (GSSAAPSATPSSSGKGSPSSDDTPAATTTTTTPTKQNES) are disordered. Asn-163 carries an N-linked (GlcNAc...) asparagine glycan.

This chain is Blue copper protein, found in Pisum sativum (Garden pea).